Consider the following 895-residue polypeptide: Catenin alpha-3 (895 aa).

Residues Glu-74–Arg-107 adopt a coiled-coil conformation. Ser-160 bears the Phosphoserine mark. The stretch at Arg-325 to Lys-379 forms a coiled coil. At Thr-361 the chain carries Phosphothreonine. Residues Asp-635–Ala-660 form a disordered region. Phosphoserine is present on residues Ser-637 and Ser-647. Thr-649 is modified (phosphothreonine).

Belongs to the vinculin/alpha-catenin family. Interacts with CTNNB1. Interacts with PKP2. As to expression, expressed in heart (at protein level).

Its subcellular location is the cytoplasm. The protein resides in the cytoskeleton. It localises to the cell junction. It is found in the desmosome. May be involved in formation of stretch-resistant cell-cell adhesion complexes. This chain is Catenin alpha-3, found in Mus musculus (Mouse).